Reading from the N-terminus, the 37-residue chain is Photosystem II reaction center protein M (37 aa).

A helical transmembrane segment spans residues 7–27; the sequence is AFIAVLLFLAVPTAFLLIPYV.

It belongs to the PsbM family. In terms of assembly, PSII is composed of 1 copy each of membrane proteins PsbA, PsbB, PsbC, PsbD, PsbE, PsbF, PsbH, PsbI, PsbJ, PsbK, PsbL, PsbM, PsbT, PsbX, PsbY, PsbZ, Psb30/Ycf12, at least 3 peripheral proteins of the oxygen-evolving complex and a large number of cofactors. It forms dimeric complexes.

Its subcellular location is the plastid. The protein resides in the chloroplast thylakoid membrane. Its function is as follows. One of the components of the core complex of photosystem II (PSII). PSII is a light-driven water:plastoquinone oxidoreductase that uses light energy to abstract electrons from H(2)O, generating O(2) and a proton gradient subsequently used for ATP formation. It consists of a core antenna complex that captures photons, and an electron transfer chain that converts photonic excitation into a charge separation. This subunit is found at the monomer-monomer interface. The sequence is that of Photosystem II reaction center protein M from Pinus thunbergii (Japanese black pine).